A 252-amino-acid polypeptide reads, in one-letter code: Probable transcriptional regulatory protein Kole_1935 (252 aa).

Belongs to the TACO1 family.

It is found in the cytoplasm. The protein is Probable transcriptional regulatory protein Kole_1935 of Kosmotoga olearia (strain ATCC BAA-1733 / DSM 21960 / TBF 19.5.1).